A 283-amino-acid polypeptide reads, in one-letter code: Pantothenate synthetase (283 aa).

34–41 (MGALHEGH) provides a ligand contact to ATP. Residue His41 is the Proton donor of the active site. Gln65 lines the (R)-pantoate pocket. Gln65 provides a ligand contact to beta-alanine. 152 to 155 (GEKD) lines the ATP pocket. Gln158 is a (R)-pantoate binding site. 189 to 192 (MSSR) is an ATP binding site.

This sequence belongs to the pantothenate synthetase family. As to quaternary structure, homodimer.

The protein resides in the cytoplasm. It catalyses the reaction (R)-pantoate + beta-alanine + ATP = (R)-pantothenate + AMP + diphosphate + H(+). Its pathway is cofactor biosynthesis; (R)-pantothenate biosynthesis; (R)-pantothenate from (R)-pantoate and beta-alanine: step 1/1. Catalyzes the condensation of pantoate with beta-alanine in an ATP-dependent reaction via a pantoyl-adenylate intermediate. The chain is Pantothenate synthetase from Rhodopseudomonas palustris (strain BisA53).